The chain runs to 269 residues: Phosphonates import ATP-binding protein PhnC (269 aa).

Residues 8–251 form the ABC transporter domain; the sequence is IHLYGASLRH…LLDALYANEQ (244 aa). 40-47 is an ATP binding site; sequence GPSGAGKS.

It belongs to the ABC transporter superfamily. Phosphonates importer (TC 3.A.1.9.1) family. In terms of assembly, the complex is composed of two ATP-binding proteins (PhnC), two transmembrane proteins (PhnE) and a solute-binding protein (PhnD).

It is found in the cell inner membrane. The catalysed reaction is phosphonate(out) + ATP + H2O = phosphonate(in) + ADP + phosphate + H(+). Its function is as follows. Part of the ABC transporter complex PhnCDE involved in phosphonates import. Responsible for energy coupling to the transport system. In Pseudomonas putida (strain ATCC 47054 / DSM 6125 / CFBP 8728 / NCIMB 11950 / KT2440), this protein is Phosphonates import ATP-binding protein PhnC.